The following is an 86-amino-acid chain: V-type proton ATPase subunit e (86 aa).

The helical transmembrane segment at 1–21 (MGILIPLVSVSAFWAIIGFGG) threads the bilayer. At 22-32 (PWIVPKGPNRG) the chain is on the cytoplasmic side. The chain crosses the membrane as a helical span at residues 33–53 (IIQLMIIMTAVCCWMFWIMVF). Residues 54–86 (LHQLNPLIGPQINVKTIRWISEKWGDAPNVINN) lie on the Lumenal side of the membrane.

The protein belongs to the V-ATPase e1/e2 subunit family. As to quaternary structure, V-ATPase is a heteromultimeric enzyme made up of two complexes: the ATP-hydrolytic V1 complex and the proton translocation V0 complex. The V1 complex consists of three catalytic AB heterodimers that form a heterohexamer, three peripheral stalks each consisting of EG heterodimers, one central rotor including subunits D and F, and the regulatory subunits C and H. The proton translocation complex V0 consists of the proton transport subunit a, a ring of proteolipid subunits c9c'', rotary subunit d, subunits e and f, and the accessory subunits vah-19/Ac45 and vah-20/PRR.

Its subcellular location is the apical cell membrane. In terms of biological role, subunit of the V0 complex of vacuolar(H+)-ATPase (V-ATPase), a multisubunit enzyme composed of a peripheral complex (V1) that hydrolyzes ATP and a membrane integral complex (V0) that translocates protons. V-ATPase is responsible for acidifying and maintaining the pH of intracellular compartments and in some cell types, is targeted to the plasma membrane, where it is responsible for acidifying the extracellular environment. During embryonic development, the V-ATPase is required to repress fusion of epidermal cells probably by negatively regulating eff-1-mediated cell fusion. This is V-type proton ATPase subunit e from Caenorhabditis elegans.